Consider the following 204-residue polypeptide: Protein LURP-one-related 14 (204 aa).

This sequence belongs to the LOR family.

Its function is as follows. Might be related to the phospholipid scramblase and tubby-like superfamily of membrane tethered transcription factors. The chain is Protein LURP-one-related 14 from Arabidopsis thaliana (Mouse-ear cress).